We begin with the raw amino-acid sequence, 302 residues long: Myb-related protein Hv33 (302 aa).

2 HTH myb-type domains span residues 11 to 63 (QPKV…INYL) and 64 to 118 (RPDL…KKKL). DNA-binding regions (H-T-H motif) lie at residues 39-63 (WSSV…INYL) and 91-114 (WSQI…NSCI). The disordered stretch occupies residues 137–158 (ATAAAALPDAEEEDRKPLCPAV).

In terms of tissue distribution, germinating seed and apical meristem of shoot and root.

It localises to the nucleus. Possible transcription activator in response to an external signal. May be involved in the regulation of flavonoid biosynthesis. In Hordeum vulgare (Barley), this protein is Myb-related protein Hv33 (MYB2).